The primary structure comprises 226 residues: GTP-binding nuclear protein Ran (226 aa).

A Small GTPase Ran-type domain is found at 3–184 (DPISFKVILV…LSILRTLLND (182 aa)). 14-21 (DGATGKTT) serves as a coordination point for GTP. Positions 33 to 41 (KQYISTIGV) are switch-I. GTP is bound by residues G70, 135–138 (NKCD), and 163–165 (SAK). The interval 70 to 86 (GQEKFGGLRDGYYVDSD) is switch-II.

Belongs to the small GTPase superfamily. Ran family. As to quaternary structure, found in a nuclear export complex with RanGTP, exportin and pre-miRNA.

It is found in the nucleus. Functionally, GTP-binding protein involved in nucleocytoplasmic transport. Required for the import of protein into the nucleus and also for RNA export. Involved in chromatin condensation and control of cell cycle. This Giardia intestinalis (Giardia lamblia) protein is GTP-binding nuclear protein Ran.